A 272-amino-acid chain; its full sequence is Putative pyruvate, phosphate dikinase regulatory protein (272 aa).

An ADP-binding site is contributed by G153–T160.

It belongs to the pyruvate, phosphate/water dikinase regulatory protein family. PDRP subfamily.

It catalyses the reaction N(tele)-phospho-L-histidyl/L-threonyl-[pyruvate, phosphate dikinase] + ADP = N(tele)-phospho-L-histidyl/O-phospho-L-threonyl-[pyruvate, phosphate dikinase] + AMP + H(+). The catalysed reaction is N(tele)-phospho-L-histidyl/O-phospho-L-threonyl-[pyruvate, phosphate dikinase] + phosphate + H(+) = N(tele)-phospho-L-histidyl/L-threonyl-[pyruvate, phosphate dikinase] + diphosphate. In terms of biological role, bifunctional serine/threonine kinase and phosphorylase involved in the regulation of the pyruvate, phosphate dikinase (PPDK) by catalyzing its phosphorylation/dephosphorylation. This is Putative pyruvate, phosphate dikinase regulatory protein from Chelativorans sp. (strain BNC1).